The chain runs to 543 residues: Chaperonin GroEL 1 (543 aa).

Residues 30-33 (TLGP), K51, 87-91 (DGTTT), G415, and D496 each bind ATP.

The protein belongs to the chaperonin (HSP60) family. As to quaternary structure, forms a cylinder of 14 subunits composed of two heptameric rings stacked back-to-back. Interacts with the co-chaperonin GroES.

The protein resides in the cytoplasm. It catalyses the reaction ATP + H2O + a folded polypeptide = ADP + phosphate + an unfolded polypeptide.. In terms of biological role, together with its co-chaperonin GroES, plays an essential role in assisting protein folding. The GroEL-GroES system forms a nano-cage that allows encapsulation of the non-native substrate proteins and provides a physical environment optimized to promote and accelerate protein folding. This Mesorhizobium japonicum (strain LMG 29417 / CECT 9101 / MAFF 303099) (Mesorhizobium loti (strain MAFF 303099)) protein is Chaperonin GroEL 1.